Here is a 220-residue protein sequence, read N- to C-terminus: Adenylate kinase (220 aa).

Position 10-15 (10-15 (GSGKST)) interacts with ATP. Residues 30-59 (SSGDLIRKEIAEGTPLGREMQAYLARGDLI) form an NMP region. AMP is bound by residues Ser-31, Arg-36, 57-59 (DLI), 83-86 (GYPR), and Gln-90. The LID stretch occupies residues 124-161 (GRRICPKCGAVYHVEFNPPKIPGRCDVCGAELVQREDD). Residue Arg-125 participates in ATP binding. Residues Cys-128 and Cys-131 each contribute to the Zn(2+) site. ATP is bound at residue 134-135 (VY). Residues Cys-148 and Cys-151 each coordinate Zn(2+). AMP contacts are provided by Arg-158 and Arg-169. Gly-197 is a binding site for ATP.

This sequence belongs to the adenylate kinase family. Monomer.

Its subcellular location is the cytoplasm. The catalysed reaction is AMP + ATP = 2 ADP. It participates in purine metabolism; AMP biosynthesis via salvage pathway; AMP from ADP: step 1/1. Catalyzes the reversible transfer of the terminal phosphate group between ATP and AMP. Plays an important role in cellular energy homeostasis and in adenine nucleotide metabolism. This chain is Adenylate kinase, found in Pyrococcus furiosus (strain ATCC 43587 / DSM 3638 / JCM 8422 / Vc1).